An 865-amino-acid polypeptide reads, in one-letter code: Outer membrane usher protein HtrE (865 aa).

The first 29 residues, 1 to 29 (MTIEYTKNYHHLTRIATFCALLYCNTAFS), serve as a signal peptide directing secretion. Cys-838 and Cys-862 are joined by a disulfide.

It belongs to the fimbrial export usher family.

Its subcellular location is the cell outer membrane. Part of the yadCKLM-htrE-yadVN fimbrial operon. Could contribute to adhesion to various surfaces in specific environmental niches. Probably involved in the export and assembly of fimbrial subunits across the outer membrane. In Escherichia coli (strain K12), this protein is Outer membrane usher protein HtrE (htrE).